Consider the following 149-residue polypeptide: Deoxyuridine 5'-triphosphate nucleotidohydrolase (149 aa).

Substrate-binding positions include 66 to 68, asparagine 79, 83 to 85, and lysine 93; these read RSG and TID.

The protein belongs to the dUTPase family. Mg(2+) serves as cofactor.

The catalysed reaction is dUTP + H2O = dUMP + diphosphate + H(+). It participates in pyrimidine metabolism; dUMP biosynthesis; dUMP from dCTP (dUTP route): step 2/2. In terms of biological role, this enzyme is involved in nucleotide metabolism: it produces dUMP, the immediate precursor of thymidine nucleotides and it decreases the intracellular concentration of dUTP so that uracil cannot be incorporated into DNA. This chain is Deoxyuridine 5'-triphosphate nucleotidohydrolase, found in Corynebacterium glutamicum (strain ATCC 13032 / DSM 20300 / JCM 1318 / BCRC 11384 / CCUG 27702 / LMG 3730 / NBRC 12168 / NCIMB 10025 / NRRL B-2784 / 534).